The chain runs to 130 residues: Small ribosomal subunit protein uS11c (130 aa).

This sequence belongs to the universal ribosomal protein uS11 family. As to quaternary structure, part of the 30S ribosomal subunit.

It localises to the plastid. It is found in the chloroplast. This chain is Small ribosomal subunit protein uS11c, found in Marchantia polymorpha (Common liverwort).